The primary structure comprises 1690 residues: DNA-directed RNA polymerase subunit beta' (1690 aa).

The Zn(2+) site is built by Cys-63, Cys-65, Cys-78, and Cys-81. Mg(2+) is bound by residues Asp-753, Asp-755, and Asp-757. Zn(2+)-binding residues include Cys-1107, Cys-1295, Cys-1302, and Cys-1305.

It belongs to the RNA polymerase beta' chain family. As to quaternary structure, the RNAP catalytic core consists of 2 alpha, 1 beta, 1 beta' and 1 omega subunit. When a sigma factor is associated with the core the holoenzyme is formed, which can initiate transcription. Requires Mg(2+) as cofactor. The cofactor is Zn(2+).

The enzyme catalyses RNA(n) + a ribonucleoside 5'-triphosphate = RNA(n+1) + diphosphate. Functionally, DNA-dependent RNA polymerase catalyzes the transcription of DNA into RNA using the four ribonucleoside triphosphates as substrates. The polypeptide is DNA-directed RNA polymerase subunit beta' (Thermotoga maritima (strain ATCC 43589 / DSM 3109 / JCM 10099 / NBRC 100826 / MSB8)).